The chain runs to 987 residues: MKVVNLKQAILQAWKERWSDYQWAINMKKFFPKGATWDILNLAEALLEQAMIGPSPNPLILSYLKYAISSQMVSYSSVLTAISKFDDFSRDLCVQALLDIMDMFCDRLSCHGKAEECIGLCRALLSALHWLLRCTAASAERLQEGLEAGSAVTGEKQLALCLQCLEKTLSSTKNRALLHIAKLEEASSWTAIEHCLLKLGEILANLSNPQLRSQAEHCGTLIRSIPTMLSVHSEQLHKTGFPTIHALILLEGTMNLTGEMQPLVEQLMMVKRMQHIPTPLFVLEIWKACFVGLIESPEGTQELKWTAFTYLKIPQVLVKLKKYFHGDKDFTEDVNCAFEFLLKLTPLLDKADQRCNCDCTNFLLQECNKQGLLSEASFASLVSKRTADRDPQLKSSENANIQPNPGLILRAEPTVTNILKTMDADHSKSPEGLLGVLGHMLSGKSLDLLLAAAAATGKLKSFARKFINLNEFTTHGSGESTKTASVRALLFDISFLMLCHVAQTYGSEVILSESSSGEEVPFFETWMQTCMPEEGKILNPDHPCFRPDSTKVESLVALLNNSSEMKLVQMKWHEACLSISAAILEILNAWENGVLAFESIQKITDNIKGKVCSLAVCAVAWLVAHVRMLGLDEREKSLQMIRQLAGPLYSENTLQFYNERVVIMNSILEHMCADVLQQTATQIKFPSTGVDTMPYWNLLPPKRPIKEVLTDIFAKVLEKGWVDSRSIHILDTLLHMGGVYWFCNNLIKELLKETRKEHTLRAVQLLYSIFCLDMQQVTLVLLGHILPGLLTDSSKWHSLMDPPGTALAKLAVWCALSSYSSHKGQASSRQKKRHREDIEDYISLFPVEDMQPSKLMRLLSSNEDDASILSSPTDRSMNSSLSASQLHTVNMRDPLNRVLANLFLLISSVLGSRTAGPHTQFVQWFMEECVDCLEQDSRGSILQFMPFTTVSELVKVSAMSSPKVVLAITDLSLPLGRQVAAKAIAAL.

6 consecutive short sequence motifs (LXXLL motif) follow at residues 128–132 (LHWLL), 344–348 (LTPLL), 446–450 (LDLLL), 555–559 (LVALL), 786–790 (LPGLL), and 855–859 (LMRLL). Phosphoserine occurs at positions 860 and 871.

Belongs to the Mediator complex subunit 24 family. In terms of assembly, component of the Mediator complex, which is composed of MED1, MED4, MED6, MED7, MED8, MED9, MED10, MED11, MED12, MED13, MED13L, MED14, MED15, MED16, MED17, MED18, MED19, MED20, MED21, MED22, MED23, MED24, MED25, MED26, MED27, MED29, MED30, MED31, CCNC, CDK8 and CDC2L6/CDK11. The MED12, MED13, CCNC and CDK8 subunits form a distinct module termed the CDK8 module. Mediator containing the CDK8 module is less active than Mediator lacking this module in supporting transcriptional activation. Individual preparations of the Mediator complex lacking one or more distinct subunits have been variously termed ARC, CRSP, DRIP, PC2, SMCC and TRAP. Interacts with AR.

It localises to the nucleus. In terms of biological role, component of the Mediator complex, a coactivator involved in the regulated transcription of nearly all RNA polymerase II-dependent genes. Mediator functions as a bridge to convey information from gene-specific regulatory proteins to the basal RNA polymerase II transcription machinery. Mediator is recruited to promoters by direct interactions with regulatory proteins and serves as a scaffold for the assembly of a functional preinitiation complex with RNA polymerase II and the general transcription factors. This is Mediator of RNA polymerase II transcription subunit 24 (Med24) from Rattus norvegicus (Rat).